Reading from the N-terminus, the 1014-residue chain is Isoleucine--tRNA ligase (1014 aa).

Positions 48–58 (PTANGRPGIHH) match the 'HIGH' region motif. Positions 628–632 (KMSKS) match the 'KMSKS' region motif. Lys-631 is a binding site for ATP.

Belongs to the class-I aminoacyl-tRNA synthetase family. IleS type 2 subfamily. In terms of assembly, monomer. Zn(2+) serves as cofactor.

The protein resides in the cytoplasm. It catalyses the reaction tRNA(Ile) + L-isoleucine + ATP = L-isoleucyl-tRNA(Ile) + AMP + diphosphate. Functionally, catalyzes the attachment of isoleucine to tRNA(Ile). As IleRS can inadvertently accommodate and process structurally similar amino acids such as valine, to avoid such errors it has two additional distinct tRNA(Ile)-dependent editing activities. One activity is designated as 'pretransfer' editing and involves the hydrolysis of activated Val-AMP. The other activity is designated 'posttransfer' editing and involves deacylation of mischarged Val-tRNA(Ile). In Dehalococcoides mccartyi (strain ATCC BAA-2266 / KCTC 15142 / 195) (Dehalococcoides ethenogenes (strain 195)), this protein is Isoleucine--tRNA ligase.